The primary structure comprises 385 residues: MNPVPAQREYFLDSIRAWLMLLGIPFHISLIYSSHTWHVNSAEPSLWLTLFNDFIHSFRMQVFFVISGYFSYMLFLRYPLKKWWKVRVERVGIPMLTAIPLLTLPQFIMLQYVKGKAESWPGLSLYDKYNTLAWELISHLWFLLVLVVMTTLCVWIFKRIRNNLENSDKTNKKFSMVKLSVIFLCLGIGYAVIRRTIFIVYPPILSNGMFNFIVMQTLFYLPFFILGALAFIFPHLKALFTTPSRGCTFAAALAFVAYLLNQRYGSGDAWMYETESVITMVLGLWMVNVVFSFGHRLLNFQSARVTYFVNASLFIYLVHHPLTLFFGAYITPHITSNWLGFLCGLIFVVGIAIILYEIHLRIPLLKFLFSGKPVVKRENDKAPAR.

The next 10 membrane-spanning stretches (helical) occupy residues 17-37 (AWLM…SHTW), 60-80 (MQVF…RYPL), 91-111 (VGIP…IMLQ), 137-157 (ISHL…VWIF), 173-193 (KFSM…YAVI), 212-232 (FIVM…LAFI), 239-259 (LFTT…VAYL), 274-294 (TESV…FSFG), 311-331 (ASLF…AYIT), and 338-358 (WLGF…LYEI).

Belongs to the acyltransferase 3 family. OpgC subfamily.

The protein localises to the cell membrane. It functions in the pathway glycan metabolism; osmoregulated periplasmic glucan (OPG) biosynthesis. In terms of biological role, necessary for the succinyl substitution of periplasmic glucans. Could catalyze the transfer of succinyl residues from the cytoplasmic side of the membrane to the nascent glucan backbones on the periplasmic side of the membrane. The protein is Glucans biosynthesis protein C of Escherichia coli O45:K1 (strain S88 / ExPEC).